Reading from the N-terminus, the 146-residue chain is Hemoglobin subunit beta-1 (146 aa).

The 145-residue stretch at 2-146 folds into the Globin domain; it reads GLTAHDRQLI…IADALGKGYH (145 aa). Histidine 63 and histidine 92 together coordinate heme b.

The protein belongs to the globin family. Heterotetramer of two alpha chains and two beta chains. Red blood cells.

Functionally, involved in oxygen transport from the lung to the various peripheral tissues. This chain is Hemoglobin subunit beta-1 (hbb1), found in Xenopus borealis (Kenyan clawed frog).